We begin with the raw amino-acid sequence, 407 residues long: Phosphopentomutase (407 aa).

Residues Asp10, Asp306, His311, Asp347, His348, and His359 each contribute to the Mn(2+) site.

It belongs to the phosphopentomutase family. It depends on Mn(2+) as a cofactor.

It is found in the cytoplasm. The enzyme catalyses 2-deoxy-alpha-D-ribose 1-phosphate = 2-deoxy-D-ribose 5-phosphate. It carries out the reaction alpha-D-ribose 1-phosphate = D-ribose 5-phosphate. Its pathway is carbohydrate degradation; 2-deoxy-D-ribose 1-phosphate degradation; D-glyceraldehyde 3-phosphate and acetaldehyde from 2-deoxy-alpha-D-ribose 1-phosphate: step 1/2. Its function is as follows. Isomerase that catalyzes the conversion of deoxy-ribose 1-phosphate (dRib-1-P) and ribose 1-phosphate (Rib-1-P) to deoxy-ribose 5-phosphate (dRib-5-P) and ribose 5-phosphate (Rib-5-P), respectively. The chain is Phosphopentomutase from Photorhabdus laumondii subsp. laumondii (strain DSM 15139 / CIP 105565 / TT01) (Photorhabdus luminescens subsp. laumondii).